A 255-amino-acid chain; its full sequence is MVLIRVIANLLILQLSYAQKSSELVIGGDECDINEHRFLAFLYAGGYYCGGTLINQEWVLSAAHCDKRIIRIYLGMHTRSVPNDDEEIRYPKEKFICPNKKKNVITHKDIMLIRLNRPVKNSEHIAPLSLPSNPPSVGSVCRIMGWGSITTPDETSPNVPHCANINLFNNTVCREAYNGLPAKTLCAGVLQGGIDTCGGDSGGPLICNGQFQGILSWGGIPCAQPRKPAFYTKVFDYLPWIQSIIAGNKTATCPP.

An N-terminal signal peptide occupies residues 1–18 (MVLIRVIANLLILQLSYA). Positions 19–24 (QKSSEL) are excised as a propeptide. Residues 25 to 246 (VIGGDECDIN…YLPWIQSIIA (222 aa)) enclose the Peptidase S1 domain. Disulfide bonds link Cys31-Cys162, Cys49-Cys65, Cys97-Cys253, Cys141-Cys207, Cys173-Cys186, and Cys197-Cys222. Catalysis depends on charge relay system residues His64 and Asp109. Asn169 is a glycosylation site (N-linked (GlcNAc...) asparagine). The active-site Charge relay system is Ser201. N-linked (GlcNAc...) asparagine glycosylation is present at Asn248.

It belongs to the peptidase S1 family. Snake venom subfamily. In terms of assembly, monomer. In terms of tissue distribution, expressed by the venom gland.

It localises to the secreted. Functionally, snake venom serine protease that may act in the hemostasis system of the prey. In Bothrops jararaca (Jararaca), this protein is Snake venom serine protease HS112.